The sequence spans 410 residues: Arginine deiminase (410 aa).

The Amidino-cysteine intermediate role is filled by C400.

This sequence belongs to the arginine deiminase family.

The protein resides in the cytoplasm. The enzyme catalyses L-arginine + H2O = L-citrulline + NH4(+). Its pathway is amino-acid degradation; L-arginine degradation via ADI pathway; carbamoyl phosphate from L-arginine: step 1/2. The protein is Arginine deiminase of Bacillus cereus (strain G9842).